Consider the following 157-residue polypeptide: SsrA-binding protein (157 aa).

The protein belongs to the SmpB family.

The protein resides in the cytoplasm. Required for rescue of stalled ribosomes mediated by trans-translation. Binds to transfer-messenger RNA (tmRNA), required for stable association of tmRNA with ribosomes. tmRNA and SmpB together mimic tRNA shape, replacing the anticodon stem-loop with SmpB. tmRNA is encoded by the ssrA gene; the 2 termini fold to resemble tRNA(Ala) and it encodes a 'tag peptide', a short internal open reading frame. During trans-translation Ala-aminoacylated tmRNA acts like a tRNA, entering the A-site of stalled ribosomes, displacing the stalled mRNA. The ribosome then switches to translate the ORF on the tmRNA; the nascent peptide is terminated with the 'tag peptide' encoded by the tmRNA and targeted for degradation. The ribosome is freed to recommence translation, which seems to be the essential function of trans-translation. The protein is SsrA-binding protein of Chlorobium chlorochromatii (strain CaD3).